The chain runs to 876 residues: Exosome complex component 10 homolog (876 aa).

The segment at 1–22 (MSGEESMPDEEQKQSEEEEEMI) is disordered. The 3'-5' exonuclease domain maps to 279–445 (TMIDTKEKLE…YSYDMLREQL (167 aa)). Mg(2+)-binding residues include Asp-303, Glu-305, Asp-361, and Asp-430. One can recognise an HRDC domain in the interval 489–569 (NTRQDYALTH…VEARDVKLEK (81 aa)). Basic and acidic residues-rich tracts occupy residues 690-730 (EKQE…EFDA), 741-752 (VPDDPNKPKDPE), and 834-847 (KPVRDNNADFDPFH). Residues 690-876 (EKQEEEERKE…NRQGTINYKK (187 aa)) are disordered. The span at 848–861 (QKYRLKNKTKKNMA) shows a compositional bias: basic residues.

The protein belongs to the exosome component 10/RRP6 family. As to quaternary structure, component of the RNA exosome complex. Interacts with crn-5. Requires Mg(2+) as cofactor. In terms of tissue distribution, ubiquitously expressed.

The protein localises to the nucleus. The protein resides in the nucleolus. Its subcellular location is the nucleoplasm. In terms of biological role, catalytic component of the RNA exosome complex which has 3'-&gt;5' exoribonuclease activity and participates in a multitude of cellular RNA processing and degradation events. Involved in apoptotic DNA degradation. Involved in regulation of antisense ribosomal siRNA production. Involved in response to cold-warm shock. This Caenorhabditis elegans protein is Exosome complex component 10 homolog.